A 170-amino-acid polypeptide reads, in one-letter code: Probable chemoreceptor glutamine deamidase CheD (170 aa).

This sequence belongs to the CheD family.

The catalysed reaction is L-glutaminyl-[protein] + H2O = L-glutamyl-[protein] + NH4(+). Its function is as follows. Probably deamidates glutamine residues to glutamate on methyl-accepting chemotaxis receptors (MCPs), playing an important role in chemotaxis. The sequence is that of Probable chemoreceptor glutamine deamidase CheD from Maridesulfovibrio salexigens (strain ATCC 14822 / DSM 2638 / NCIMB 8403 / VKM B-1763) (Desulfovibrio salexigens).